Reading from the N-terminus, the 119-residue chain is Secreted RxLR effector protein RXLR-C04 (119 aa).

The first 22 residues, 1 to 22 (MRLSYIFVVVATIITNCDIASA), serve as a signal peptide directing secretion. Positions 40 to 77 (RILRQTNDSDDLEPIRHAMLDMELLEKIAKDPKYAEEV) match the RxLR-dEER motif. N-linked (GlcNAc...) asparagine glycosylation is present at Asn46.

The protein belongs to the RxLR effector family.

It localises to the secreted. The protein resides in the host cytoplasm. It is found in the host nucleus. Functionally, secreted effector that suppresses pattern-triggered immunity (PTI) in plant host. The protein is Secreted RxLR effector protein RXLR-C04 of Plasmopara halstedii (Downy mildew of sunflower).